The primary structure comprises 477 residues: Proline--tRNA ligase (477 aa).

Belongs to the class-II aminoacyl-tRNA synthetase family. ProS type 3 subfamily. Homodimer.

The protein resides in the cytoplasm. It catalyses the reaction tRNA(Pro) + L-proline + ATP = L-prolyl-tRNA(Pro) + AMP + diphosphate. Catalyzes the attachment of proline to tRNA(Pro) in a two-step reaction: proline is first activated by ATP to form Pro-AMP and then transferred to the acceptor end of tRNA(Pro). This is Proline--tRNA ligase from Lachnoclostridium phytofermentans (strain ATCC 700394 / DSM 18823 / ISDg) (Clostridium phytofermentans).